The sequence spans 54 residues: Large ribosomal subunit protein bL33 (54 aa).

The protein belongs to the bacterial ribosomal protein bL33 family.

The chain is Large ribosomal subunit protein bL33 from Thermobifida fusca (strain YX).